We begin with the raw amino-acid sequence, 325 residues long: Hexaprenyl-diphosphate synthase large subunit ((2E,6E)-farnesyl-diphosphate specific) (325 aa).

Isopentenyl diphosphate contacts are provided by Lys45, Arg48, and His77. All-trans-hexaprenyl diphosphate contacts are provided by Asp84, Asp88, and Arg93. The Mg(2+) site is built by Asp84 and Asp88. Residue Arg94 participates in isopentenyl diphosphate binding. All-trans-hexaprenyl diphosphate is bound by residues Lys170, Thr171, and Gln208.

This sequence belongs to the FPP/GGPP synthase family. In terms of assembly, dimer of heterodimer or heterotetramer composed of a small (Hexs-a) and large (Hexs-B) subunit. Mg(2+) serves as cofactor.

It carries out the reaction 3 isopentenyl diphosphate + (2E,6E)-farnesyl diphosphate = all-trans-hexaprenyl diphosphate + 3 diphosphate. Functionally, catalyzes the condensation of three molecules of isopentenyl diphosphate with farnesyl diphosphate (FPP) to yield (all-E)-hexaprenyl diphosphate (HexPP; C30), the precursor of the prenyl side chain of menaquinone-6. Large subunit Hexs-B catalyzes the condensation reaction and the final product chain length is cooperatively regulated by both the Hexs-A and Hexs-B subunits using the whole size of the hydrophobic cleft as a ruler. In Micrococcus luteus (Micrococcus lysodeikticus), this protein is Hexaprenyl-diphosphate synthase large subunit ((2E,6E)-farnesyl-diphosphate specific) (hexs-b).